Reading from the N-terminus, the 320-residue chain is Methionyl-tRNA formyltransferase (320 aa).

111–114 lines the (6S)-5,6,7,8-tetrahydrofolate pocket; sequence SLLP.

It belongs to the Fmt family.

The catalysed reaction is L-methionyl-tRNA(fMet) + (6R)-10-formyltetrahydrofolate = N-formyl-L-methionyl-tRNA(fMet) + (6S)-5,6,7,8-tetrahydrofolate + H(+). In terms of biological role, attaches a formyl group to the free amino group of methionyl-tRNA(fMet). The formyl group appears to play a dual role in the initiator identity of N-formylmethionyl-tRNA by promoting its recognition by IF2 and preventing the misappropriation of this tRNA by the elongation apparatus. This Bifidobacterium adolescentis (strain ATCC 15703 / DSM 20083 / NCTC 11814 / E194a) protein is Methionyl-tRNA formyltransferase.